The sequence spans 226 residues: Small ribosomal subunit protein uS3 (226 aa).

One can recognise a KH type-2 domain in the interval 39–107 (IRKFIKNKLY…NILINITEIK (69 aa)).

It belongs to the universal ribosomal protein uS3 family. As to quaternary structure, part of the 30S ribosomal subunit. Forms a tight complex with proteins S10 and S14.

Binds the lower part of the 30S subunit head. Binds mRNA in the 70S ribosome, positioning it for translation. The protein is Small ribosomal subunit protein uS3 of Acetivibrio thermocellus (strain ATCC 27405 / DSM 1237 / JCM 9322 / NBRC 103400 / NCIMB 10682 / NRRL B-4536 / VPI 7372) (Clostridium thermocellum).